The following is a 245-amino-acid chain: DNA polymerase sliding clamp 2 (245 aa).

This sequence belongs to the PCNA family. As to quaternary structure, forms homodimers with PCNA1, which then recruit PCNA3; does not form homotrimers. The heterodimers interact with RfcS homotetramers. Heterotrimer which circularizes head-to-tail (head is at N-terminus, tail is at C-terminus) to form a toroid; DNA passes through its center. Replication factor C (RFC) is required to load the toroid on the DNA. This subunit interacts with DNA polymerase I (dpo1). The heterotrimer also interacts with flap endonuclease 1, DNA ligase and XPF via the other subunits.

One of the sliding clamp subunits that acts as a moving platform for DNA processing. Responsible for tethering the catalytic subunit of DNA polymerase to DNA during high-speed replication. Heterotrimer stimulates the Holliday junction resolvase Hjc. DNA polymerase I, DNA ligase and the flap endonuclease may be constitutively associated with the PCNA heterotrimer forming a scanning complex able to couple DNA synthesis and Okazaki fragment maturation. In Saccharolobus solfataricus (strain ATCC 35092 / DSM 1617 / JCM 11322 / P2) (Sulfolobus solfataricus), this protein is DNA polymerase sliding clamp 2.